Consider the following 234-residue polypeptide: Iron-sulfur cluster co-chaperone protein HscB (234 aa).

A divalent metal cation is bound by residues Cys40, Cys43, Cys57, and Cys60. The region spanning 71-143 (DYFSLMNCNR…LTRGLYLLKL (73 aa)) is the J domain.

This sequence belongs to the HscB family. In terms of assembly, interacts with ISCU and HSPA9 to form an iron-sulfur transfer complex. Interacts with SDHAF1 (via the first LYR motif); the interaction recruits the iron-sulfur transfer complex composed of HSC20, HSPA9 and ISCU and mediates the incorporation of iron-sulfur clusters into SDHB which also interacts with HSC20. Interacts with the cytoplasmic form of ISCU and with CIA complex member CIAO1 (via LYR motif). As to quaternary structure, homodimer. Interacts with ISCU (cytoplasmic form); this interaction stabilizes the (Fe-S) clusters on ISCU. Interacts with the CIA complex member CIAO1 (via LYR motif).

It is found in the cytoplasm. The protein localises to the mitochondrion. Its pathway is cofactor biosynthesis; iron-sulfur cluster biosynthesis. Functionally, acts as a co-chaperone in iron-sulfur cluster assembly in mitochondria. Required for incorporation of iron-sulfur clusters into SDHB, the iron-sulfur protein subunit of succinate dehydrogenase that is involved in complex II of the mitochondrial electron transport chain. Recruited to SDHB by interaction with SDHAF1 which first binds SDHB and then recruits the iron-sulfur transfer complex formed by HSC20, HSPA9 and ISCU through direct binding to HSC20. Plays an essential role in hematopoiesis. In terms of biological role, acts as a co-chaperone in iron-sulfur cluster assembly in the cytoplasm. Also mediates complex formation between components of the cytosolic iron-sulfur biogenesis pathway and the CIA targeting complex composed of CIAO1, DIPK1B/FAM69B and MMS19 by binding directly to the scaffold protein ISCU and to CIAO1. This facilitates iron-sulfur cluster insertion into a number of cytoplasmic and nuclear proteins including POLD1, ELP3, DPYD and PPAT. The polypeptide is Iron-sulfur cluster co-chaperone protein HscB (Mus musculus (Mouse)).